A 131-amino-acid polypeptide reads, in one-letter code: Maturin (131 aa).

A Phosphotyrosine modification is found at Tyr34. Residues Phe107–Glu120 show a composition bias toward acidic residues. The disordered stretch occupies residues Phe107 to Gln131.

The protein belongs to the MTURN family. Phosphorylation at Tyr-34 is essential for its ability to promote megakaryocyte differentiation.

The protein localises to the cytoplasm. Promotes megakaryocyte differentiation by enhancing ERK and JNK signaling as well as up-regulating RUNX1 and FLI1 expression. Represses NF-kappa-B transcriptional activity by inhibiting phosphorylation of RELA at 'Ser- 536'. May be involved in early neuronal development. The sequence is that of Maturin (MTURN) from Bos taurus (Bovine).